A 278-amino-acid polypeptide reads, in one-letter code: NAD kinase (278 aa).

The active-site Proton acceptor is the aspartate 67. Residues 67-68, arginine 72, 137-138, lysine 148, arginine 165, aspartate 167, 178-183, alanine 202, and glutamine 237 each bind NAD(+); these read DG, NE, and TGYAMS.

This sequence belongs to the NAD kinase family. A divalent metal cation serves as cofactor.

The protein localises to the cytoplasm. The catalysed reaction is NAD(+) + ATP = ADP + NADP(+) + H(+). Its function is as follows. Involved in the regulation of the intracellular balance of NAD and NADP, and is a key enzyme in the biosynthesis of NADP. Catalyzes specifically the phosphorylation on 2'-hydroxyl of the adenosine moiety of NAD to yield NADP. This is NAD kinase from Thermococcus kodakarensis (strain ATCC BAA-918 / JCM 12380 / KOD1) (Pyrococcus kodakaraensis (strain KOD1)).